Consider the following 406-residue polypeptide: Cysteine desulfurase (406 aa).

At K226 the chain carries N6-(pyridoxal phosphate)lysine. Catalysis depends on C364, which acts as the Cysteine persulfide intermediate.

This sequence belongs to the class-V pyridoxal-phosphate-dependent aminotransferase family. Csd subfamily. As to quaternary structure, homodimer. Interacts with SufE and the SufBCD complex composed of SufB, SufC and SufD. The interaction with SufE is required to mediate the direct transfer of the sulfur atom from the S-sulfanylcysteine. It depends on pyridoxal 5'-phosphate as a cofactor.

It is found in the cytoplasm. The catalysed reaction is (sulfur carrier)-H + L-cysteine = (sulfur carrier)-SH + L-alanine. It carries out the reaction L-selenocysteine + AH2 = hydrogenselenide + L-alanine + A + H(+). It participates in cofactor biosynthesis; iron-sulfur cluster biosynthesis. Cysteine desulfurases mobilize the sulfur from L-cysteine to yield L-alanine, an essential step in sulfur metabolism for biosynthesis of a variety of sulfur-containing biomolecules. Component of the suf operon, which is activated and required under specific conditions such as oxidative stress and iron limitation. Acts as a potent selenocysteine lyase in vitro, that mobilizes selenium from L-selenocysteine. Selenocysteine lyase activity is however unsure in vivo. This is Cysteine desulfurase from Escherichia coli (strain SE11).